A 332-amino-acid chain; its full sequence is Glycine betaine-binding periplasmic protein OusX (332 aa).

The signal sequence occupies residues 1–21; that stretch reads MRNISMATLALTTVLSTGLFA.

As to quaternary structure, the complex is composed of two ATP-binding proteins (OusV), two transmembrane proteins (OusW) and a solute-binding protein (OusX).

Its subcellular location is the periplasm. Its function is as follows. Part of the OusB ABC transporter complex involved in glycine betaine and choline uptake. Binds glycine betaine. The polypeptide is Glycine betaine-binding periplasmic protein OusX (Dickeya dadantii (strain 3937) (Erwinia chrysanthemi (strain 3937))).